Reading from the N-terminus, the 216-residue chain is MVDMTQLQAIYGGTFDPVHYGHLKPVEILANQIGLSKVIIMPNNVPPHRPQPEATSAQRVHMLKLAIADKPLFTLDERELRRDTPSWTAQTLQEWRQEQGPRKPLAFIIGQDSLLTFPTWHNYETILDNVHLIVCRRPGYPLTMAQEADQRWLDRHLTHDVESLHNSPSGVIYLAETPWFDISATIIRQRLERGESCAEMLPAAVLDYIREQGLYC.

This sequence belongs to the NadD family.

It catalyses the reaction nicotinate beta-D-ribonucleotide + ATP + H(+) = deamido-NAD(+) + diphosphate. Its pathway is cofactor biosynthesis; NAD(+) biosynthesis; deamido-NAD(+) from nicotinate D-ribonucleotide: step 1/1. Its function is as follows. Catalyzes the reversible adenylation of nicotinate mononucleotide (NaMN) to nicotinic acid adenine dinucleotide (NaAD). The polypeptide is Probable nicotinate-nucleotide adenylyltransferase (Klebsiella pneumoniae subsp. pneumoniae (strain ATCC 700721 / MGH 78578)).